Consider the following 372-residue polypeptide: Oxidoreductase ptaL (372 aa).

Positions 1–16 (MKHIVIIGGGFAGVST) are cleaved as a signal peptide. 6-hydroxy-FAD contacts are provided by residues 8–12 (GGGFA) and R51. N-linked (GlcNAc...) asparagine glycosylation is present at N251. D285 contributes to the 6-hydroxy-FAD binding site.

This sequence belongs to the FAD-dependent oxidoreductase family. It depends on 6-hydroxy-FAD as a cofactor.

Its pathway is secondary metabolite biosynthesis. Oxidoreductase; part of the gene cluster that mediates the biosynthesis of pestheic acid, a diphenyl ether which is a biosynthetic precursor of the unique chloropupukeananes. The biosynthesis initiates from condensation of acetate and malonate units catalyzed by the non-reducing PKS ptaA. As the ptaA protein is TE/CLC domain-deficient, hydrolysis and Claisen cyclization of the polyketide could be catalyzed by ptaB containing a beta-lactamase domain. The ptaB protein might hydrolyze the thioester bond between the ACP of ptaA and the intermediate to release atrochrysone carboxylic acid, which is spontaneously dehydrated to form endocrocin anthrone. Endocrocin anthrone is then converted to endocrocin, catalyzed by the anthrone oxygenase ptaC. Spontaneous decarboxylation of endocrocin occurs to generate emodin. An O-methyltransferase (ptaH or ptaI) could methylate emodin to form physcion. PtaJ could then catalyze the oxidative cleavage of physcion, and rotation of the intermediate could then afford desmethylisosulochrin. PtaF, a putative NADH-dependent oxidoreductase, might also participate in the oxidative cleavage step. Desmethylisosulochrin is then transformed by another O-methyltransferase (ptaH or ptaI) to form isosulochrin. Chlorination of isosulochrin by ptaM in the cyclohexadienone B ring then produces chloroisosulochrin. PtaE is responsible for the oxidative coupling reactions of both benzophenones isosulochrin and chloroisosulochrin to RES-1214-1 and pestheic acid respectively, regardless of chlorination. This is Oxidoreductase ptaL from Pestalotiopsis fici (strain W106-1 / CGMCC3.15140).